The primary structure comprises 122 residues: NADH-quinone oxidoreductase subunit A (122 aa).

3 helical membrane passes run 10–30 (LIVF…LTIG), 67–87 (FALL…WAVV), and 91–111 (LGLF…IGLI).

Belongs to the complex I subunit 3 family. As to quaternary structure, NDH-1 is composed of 14 different subunits. Subunits NuoA, H, J, K, L, M, N constitute the membrane sector of the complex.

Its subcellular location is the cell membrane. It carries out the reaction a quinone + NADH + 5 H(+)(in) = a quinol + NAD(+) + 4 H(+)(out). Functionally, NDH-1 shuttles electrons from NADH, via FMN and iron-sulfur (Fe-S) centers, to quinones in the respiratory chain. The immediate electron acceptor for the enzyme in this species is believed to be a menaquinone. Couples the redox reaction to proton translocation (for every two electrons transferred, four hydrogen ions are translocated across the cytoplasmic membrane), and thus conserves the redox energy in a proton gradient. The chain is NADH-quinone oxidoreductase subunit A from Geobacillus thermodenitrificans (strain NG80-2).